Reading from the N-terminus, the 139-residue chain is Nucleoside diphosphate kinase (139 aa).

ATP-binding residues include lysine 10, phenylalanine 58, arginine 86, threonine 92, arginine 104, and asparagine 114. Residue histidine 117 is the Pros-phosphohistidine intermediate of the active site.

It belongs to the NDK family. Homotetramer. Mg(2+) serves as cofactor.

Its subcellular location is the cytoplasm. The enzyme catalyses a 2'-deoxyribonucleoside 5'-diphosphate + ATP = a 2'-deoxyribonucleoside 5'-triphosphate + ADP. The catalysed reaction is a ribonucleoside 5'-diphosphate + ATP = a ribonucleoside 5'-triphosphate + ADP. Functionally, major role in the synthesis of nucleoside triphosphates other than ATP. The ATP gamma phosphate is transferred to the NDP beta phosphate via a ping-pong mechanism, using a phosphorylated active-site intermediate. This chain is Nucleoside diphosphate kinase, found in Rhodococcus erythropolis (strain PR4 / NBRC 100887).